The following is a 185-amino-acid chain: Elongation factor P (185 aa).

This sequence belongs to the elongation factor P family.

It localises to the cytoplasm. The protein operates within protein biosynthesis; polypeptide chain elongation. In terms of biological role, involved in peptide bond synthesis. Stimulates efficient translation and peptide-bond synthesis on native or reconstituted 70S ribosomes in vitro. Probably functions indirectly by altering the affinity of the ribosome for aminoacyl-tRNA, thus increasing their reactivity as acceptors for peptidyl transferase. This chain is Elongation factor P, found in Mesomycoplasma hyopneumoniae (strain J / ATCC 25934 / NCTC 10110) (Mycoplasma hyopneumoniae).